The following is a 326-amino-acid chain: Fos-related antigen 2 (326 aa).

Methionine 1 is subject to N-acetylmethionine. Positions 1-39 are disordered; it reads MYQDYPGNFDTSSRGSSGSPAHAESYSSGGGGQQKFRVD. Over residues 9-19 the composition is skewed to polar residues; sequence FDTSSRGSSGS. Lysine 35 participates in a covalent cross-link: Glycyl lysine isopeptide (Lys-Gly) (interchain with G-Cter in SUMO2). Lysine 104 bears the N6-acetyllysine; alternate mark. Lysine 104 is covalently cross-linked (Glycyl lysine isopeptide (Lys-Gly) (interchain with G-Cter in SUMO2); alternate). 3 disordered regions span residues 111–131, 193–244, and 289–326; these read GRRRRDEQLSPEEEEKRRIRR, ISPE…QRSV, and EQESPASPSESCSKAHRRSSSSGDQSSDSLNSPTLLAL. The residue at position 120 (serine 120) is a Phosphoserine. A bZIP domain is found at 124–187; the sequence is EEKRRIRRER…EKLEFMLVAH (64 aa). Residues 126 to 128 form a basic motif region; it reads KRR. The leucine-zipper stretch occupies residues 129 to 136; the sequence is IRRERNKL. Serine 200 is subject to Phosphoserine. The segment covering 201–211 has biased composition (polar residues); the sequence is PPTSGLQSLRG. Residue lysine 222 forms a Glycyl lysine isopeptide (Lys-Gly) (interchain with G-Cter in SUMO2); alternate linkage. Residue lysine 222 forms a Glycyl lysine isopeptide (Lys-Gly) (interchain with G-Cter in SUMO1); alternate linkage. Serine 230 carries the phosphoserine modification. A Glycyl lysine isopeptide (Lys-Gly) (interchain with G-Cter in SUMO2) cross-link involves residue lysine 239. Phosphoserine occurs at positions 308 and 320. A compositionally biased stretch (low complexity) spans 308–320; sequence SSSGDQSSDSLNS.

Belongs to the bZIP family. Fos subfamily. In terms of assembly, heterodimer. Interacts with the BAF multiprotein chromatin-remodeling complex subunits SMARCB1 and SMARCD1. Interacts with ARID1A and JUN. In terms of tissue distribution, expressed in the brain cortex. Expressed at night in pineal gland (at protein level). Also expressed in osteoblasts (at protein level).

It is found in the nucleus. Its function is as follows. Controls osteoclast survival and size. As a dimer with JUN, activates LIF transcription. Activates CEBPB transcription in PGE2-activated osteoblasts. This Rattus norvegicus (Rat) protein is Fos-related antigen 2 (Fosl2).